The following is a 363-amino-acid chain: Melanoma-associated antigen B16 (363 aa).

Positions E33–P124 are disordered. Residues A82–E97 show a composition bias toward low complexity. The MAGE domain occupies V128–A327. A disordered region spans residues H342–V363.

The sequence is that of Melanoma-associated antigen B16 (Mageb16) from Mus musculus (Mouse).